We begin with the raw amino-acid sequence, 1064 residues long: Alpha-aminoadipic semialdehyde synthase (1064 aa).

The interval Val-24 to Leu-445 is lysine-ketoglutarate reductase. At Thr-238 the chain carries Phosphothreonine. A Phosphoserine modification is found at Ser-458. The segment at Met-583–Glu-1064 is saccharopine dehydrogenase. L-saccharopine is bound by residues Ser-703 to Tyr-704, Asp-730, Arg-830, and Thr-852 to Arg-854. Position 729–731 (Leu-729–Pro-731) interacts with NADP(+).

It in the N-terminal section; belongs to the AlaDH/PNT family. In the C-terminal section; belongs to the saccharopine dehydrogenase family. Homodimer. Post-translationally, phosphorylation of Ser-458 seems important for the LKR activity. As to expression, ubiquitous, with higher levels in flowers. Isoform Long is mostly present in young leaves, cotyledons, root tips and mature root parts. Whereas isoform Short is mostly expressed in cotyledons and at low levels in all root parts.

The protein resides in the cytoplasm. It catalyses the reaction L-saccharopine + NADP(+) + H2O = L-lysine + 2-oxoglutarate + NADPH + H(+). The catalysed reaction is L-saccharopine + NAD(+) + H2O = (S)-2-amino-6-oxohexanoate + L-glutamate + NADH + H(+). The protein operates within amino-acid degradation; L-lysine degradation via saccharopine pathway; glutaryl-CoA from L-lysine: step 1/6. It functions in the pathway amino-acid degradation; L-lysine degradation via saccharopine pathway; glutaryl-CoA from L-lysine: step 2/6. The LKR activity is stimulated by NaCl. Its function is as follows. Bifunctional enzyme that catalyzes the first two steps in lysine degradation. The N-terminal and the C-terminal contain lysine-oxoglutarate reductase and saccharopine dehydrogenase activity, respectively. Negatively regulates free Lys accumulation in seeds. This chain is Alpha-aminoadipic semialdehyde synthase (LKR/SDH), found in Arabidopsis thaliana (Mouse-ear cress).